Consider the following 421-residue polypeptide: Subtilisin-like protease 2 (421 aa).

Positions 1–16 (MQLLNFGLLLLPFVAG) are cleaved as a signal peptide. A propeptide spanning residues 17–122 (DLAPQPEPLL…VHPDQHFYLA (106 aa)) is cleaved from the precursor. Positions 36–121 (QYLVTLKEGL…SVHPDQHFYL (86 aa)) constitute an Inhibitor I9 domain. Positions 131–421 (RWGLGYMSSK…ERKCKLPKYY (291 aa)) constitute a Peptidase S8 domain. Residue Asp169 is the Charge relay system of the active site. N-linked (GlcNAc...) asparagine glycosylation is present at Asn192. His201 serves as the catalytic Charge relay system. Asn248, Asn261, and Asn348 each carry an N-linked (GlcNAc...) asparagine glycan. Ser357 acts as the Charge relay system in catalysis. Asn388 carries N-linked (GlcNAc...) asparagine glycosylation.

The protein belongs to the peptidase S8 family.

The protein resides in the secreted. Its function is as follows. Secreted subtilisin-like serine protease with keratinolytic activity that contributes to pathogenicity. This chain is Subtilisin-like protease 2 (SUB2), found in Trichophyton rubrum (Athlete's foot fungus).